Here is a 573-residue protein sequence, read N- to C-terminus: Sulfite reductase [NADPH] hemoprotein beta-component (573 aa).

4 residues coordinate [4Fe-4S] cluster: C438, C444, C483, and C487. Residue C487 coordinates siroheme.

This sequence belongs to the nitrite and sulfite reductase 4Fe-4S domain family. As to quaternary structure, alpha(8)-beta(8). The alpha component is a flavoprotein, the beta component is a hemoprotein. It depends on siroheme as a cofactor. The cofactor is [4Fe-4S] cluster.

The catalysed reaction is hydrogen sulfide + 3 NADP(+) + 3 H2O = sulfite + 3 NADPH + 4 H(+). Its pathway is sulfur metabolism; hydrogen sulfide biosynthesis; hydrogen sulfide from sulfite (NADPH route): step 1/1. Component of the sulfite reductase complex that catalyzes the 6-electron reduction of sulfite to sulfide. This is one of several activities required for the biosynthesis of L-cysteine from sulfate. The polypeptide is Sulfite reductase [NADPH] hemoprotein beta-component (Staphylococcus haemolyticus (strain JCSC1435)).